Here is a 268-residue protein sequence, read N- to C-terminus: MERYQQLFKQLAAKNEGAFVPFVQLGDPTPALSLEIIDTLIAAGADALELGIPFSDPLADGPTIQNAALRAFAAGVTPGICFEMLAEIRKKHPTIPIGLLMYANLVFHNGIDTFYQRCADVGVDSVLIADVPFEESLPFRTAALRHGIAPIFICPPNADDDLLREIASHGRGYTYLLSRAGVTGAENHGQLPLNHLIDKLCEYNAAPALQGFGISEPEQVKISLAAGAAGAISGSAIVKIIENNVSQPAEMLAQLANFVTNMKAATRS.

Active-site proton acceptor residues include glutamate 49 and aspartate 60.

Belongs to the TrpA family. As to quaternary structure, tetramer of two alpha and two beta chains.

The catalysed reaction is (1S,2R)-1-C-(indol-3-yl)glycerol 3-phosphate + L-serine = D-glyceraldehyde 3-phosphate + L-tryptophan + H2O. It participates in amino-acid biosynthesis; L-tryptophan biosynthesis; L-tryptophan from chorismate: step 5/5. Its function is as follows. The alpha subunit is responsible for the aldol cleavage of indoleglycerol phosphate to indole and glyceraldehyde 3-phosphate. The polypeptide is Tryptophan synthase alpha chain (Yersinia enterocolitica serotype O:8 / biotype 1B (strain NCTC 13174 / 8081)).